The primary structure comprises 98 residues: Small ribosomal subunit protein uS17 (98 aa).

The protein belongs to the universal ribosomal protein uS17 family. In terms of assembly, part of the 30S ribosomal subunit.

In terms of biological role, one of the primary rRNA binding proteins, it binds specifically to the 5'-end of 16S ribosomal RNA. The polypeptide is Small ribosomal subunit protein uS17 (Carboxydothermus hydrogenoformans (strain ATCC BAA-161 / DSM 6008 / Z-2901)).